Consider the following 89-residue polypeptide: Large ribosomal subunit protein bL27 (89 aa).

Residues 1–21 (MAHKKAGGSSRNGRDSESKRL) are disordered.

It belongs to the bacterial ribosomal protein bL27 family.

This chain is Large ribosomal subunit protein bL27, found in Bartonella quintana (strain Toulouse) (Rochalimaea quintana).